The sequence spans 276 residues: Large ribosomal subunit protein uL2 (276 aa).

Disordered stretches follow at residues 30–52 (VKGLTEGKNKSGGRNNHGRTTSR) and 224–257 (VMNPVDHPHGGGEGRTSGGRHPVTPWGKPTKGYK). The segment covering 41-52 (GGRNNHGRTTSR) has biased composition (polar residues).

It belongs to the universal ribosomal protein uL2 family. In terms of assembly, part of the 50S ribosomal subunit. Forms a bridge to the 30S subunit in the 70S ribosome.

Its function is as follows. One of the primary rRNA binding proteins. Required for association of the 30S and 50S subunits to form the 70S ribosome, for tRNA binding and peptide bond formation. It has been suggested to have peptidyltransferase activity; this is somewhat controversial. Makes several contacts with the 16S rRNA in the 70S ribosome. This is Large ribosomal subunit protein uL2 from Gluconacetobacter diazotrophicus (strain ATCC 49037 / DSM 5601 / CCUG 37298 / CIP 103539 / LMG 7603 / PAl5).